Here is a 411-residue protein sequence, read N- to C-terminus: Glycogen synthase kinase-3 homolog MsK-3 (411 aa).

The region spanning 74 to 358 (YMAERVVGHG…ALEALVHPFY (285 aa)) is the Protein kinase domain. ATP-binding positions include 80 to 88 (VGHGSFGVV) and K103. Catalysis depends on D199, which acts as the Proton acceptor. At Y234 the chain carries Phosphotyrosine.

Belongs to the protein kinase superfamily. CMGC Ser/Thr protein kinase family. GSK-3 subfamily. In terms of tissue distribution, absent in leaves and petioles, very low levels are seen in the stems and roots while a moderate expression is seen in the nodes.

The enzyme catalyses L-seryl-[protein] + ATP = O-phospho-L-seryl-[protein] + ADP + H(+). It carries out the reaction L-threonyl-[protein] + ATP = O-phospho-L-threonyl-[protein] + ADP + H(+). The protein is Glycogen synthase kinase-3 homolog MsK-3 (MSK-3) of Medicago sativa (Alfalfa).